We begin with the raw amino-acid sequence, 645 residues long: Threonine--tRNA ligase (645 aa).

The 62-residue stretch at 1–62 (MSIHITFPDG…VEDGSLEIVT (62 aa)) folds into the TGS domain. Positions 242–541 (DHRKLGKELD…LTEVYKGAFP (300 aa)) are catalytic. Zn(2+)-binding residues include C336, H387, and H518.

The protein belongs to the class-II aminoacyl-tRNA synthetase family. As to quaternary structure, homodimer. Zn(2+) is required as a cofactor.

It localises to the cytoplasm. The enzyme catalyses tRNA(Thr) + L-threonine + ATP = L-threonyl-tRNA(Thr) + AMP + diphosphate + H(+). In terms of biological role, catalyzes the attachment of threonine to tRNA(Thr) in a two-step reaction: L-threonine is first activated by ATP to form Thr-AMP and then transferred to the acceptor end of tRNA(Thr). Also edits incorrectly charged L-seryl-tRNA(Thr). The chain is Threonine--tRNA ligase from Enterococcus faecalis (strain ATCC 700802 / V583).